The following is a 417-amino-acid chain: Transmembrane protease serine 11G (417 aa).

At 1-21 the chain is on the cytoplasmic side; the sequence is MYQPGILVRRKRVWKPWTVAL. A helical; Signal-anchor for type II membrane protein transmembrane segment spans residues 22–42; the sequence is ITVALLLALAVLIGLLVYFLV. The Extracellular portion of the chain corresponds to 43–417; it reads YDEKTHYYQA…RDWIKSKTSI (375 aa). Residues 46–165 form the SEA domain; that stretch reads KTHYYQASFW…PYLREMNAAQ (120 aa). Asparagine 60 carries an N-linked (GlcNAc...) asparagine glycan. Residues 186-416 enclose the Peptidase S1 domain; the sequence is IADGKPADKA…YRDWIKSKTS (231 aa). A disulfide bond links cysteine 211 and cysteine 227. Catalysis depends on charge relay system residues histidine 226 and aspartate 271. Cystine bridges form between cysteine 336/cysteine 352 and cysteine 363/cysteine 392. The Charge relay system role is filled by serine 367.

Belongs to the peptidase S1 family.

Its subcellular location is the membrane. In Mus musculus (Mouse), this protein is Transmembrane protease serine 11G (Tmprss11g).